A 262-amino-acid polypeptide reads, in one-letter code: Leucine-rich repeat-containing protein 18 (262 aa).

7 LRR repeats span residues 28 to 49 (GRKR…ILRL), 51 to 72 (DIDE…IAKF), 74 to 95 (NLRW…IGQM), 97 to 118 (SLLF…VELN), 122 to 144 (NIRT…GALK), 145 to 167 (ELHE…AKLP), and 168 to 189 (KLKK…EMFV).

In terms of tissue distribution, exclusively expressed in spermatocytes and roud spermatids within seminiferous tubules during spermatogenesis.

Its subcellular location is the cytoplasm. Functionally, may be involved in the regulation of spermatogenesis and sperm maturation. This chain is Leucine-rich repeat-containing protein 18 (Lrrc18), found in Mus musculus (Mouse).